Here is a 201-residue protein sequence, read N- to C-terminus: MNILVIKSSVNEKKGSYSSHLSDLFIKFYLEIHPEDQIEVYDLNQFGLANTNLTIKNFEDKTFYQKAESDFWINKLRKADKIVFSTSMTNFNYSATTKNFFDAITVPNKTFLLDKNTGKYTGLLKNIQNVQILTAQGAPLGWYPFGNHSALIKQIFEFLGAKVRSDFFVLDGTKVAPNNQKPIADFVAQRQNQIKILAENF.

FMN-binding positions include Ser-9 and 16–18; that span reads SYS.

It belongs to the azoreductase type 1 family. As to quaternary structure, homodimer. The cofactor is FMN.

It catalyses the reaction 2 a quinone + NADH + H(+) = 2 a 1,4-benzosemiquinone + NAD(+). The catalysed reaction is N,N-dimethyl-1,4-phenylenediamine + anthranilate + 2 NAD(+) = 2-(4-dimethylaminophenyl)diazenylbenzoate + 2 NADH + 2 H(+). In terms of biological role, quinone reductase that provides resistance to thiol-specific stress caused by electrophilic quinones. Also exhibits azoreductase activity. Catalyzes the reductive cleavage of the azo bond in aromatic azo compounds to the corresponding amines. This chain is FMN-dependent NADH:quinone oxidoreductase, found in Mesomycoplasma hyopneumoniae (strain 232) (Mycoplasma hyopneumoniae).